The chain runs to 378 residues: Ribosomal RNA large subunit methyltransferase G (378 aa).

This sequence belongs to the methyltransferase superfamily. RlmG family.

The protein resides in the cytoplasm. It catalyses the reaction guanosine(1835) in 23S rRNA + S-adenosyl-L-methionine = N(2)-methylguanosine(1835) in 23S rRNA + S-adenosyl-L-homocysteine + H(+). Its function is as follows. Specifically methylates the guanine in position 1835 (m2G1835) of 23S rRNA. In Shigella boydii serotype 18 (strain CDC 3083-94 / BS512), this protein is Ribosomal RNA large subunit methyltransferase G.